The primary structure comprises 402 residues: 1-deoxy-D-xylulose 5-phosphate reductoisomerase (402 aa).

The NADPH site is built by threonine 13, glycine 14, serine 15, isoleucine 16, and asparagine 126. Lysine 127 contributes to the 1-deoxy-D-xylulose 5-phosphate binding site. Glutamate 128 contacts NADPH. Aspartate 152 is a Mn(2+) binding site. 4 residues coordinate 1-deoxy-D-xylulose 5-phosphate: serine 153, glutamate 154, serine 188, and histidine 211. Glutamate 154 contacts Mn(2+). Residue glycine 217 coordinates NADPH. 4 residues coordinate 1-deoxy-D-xylulose 5-phosphate: serine 224, asparagine 229, lysine 230, and glutamate 233. Residue glutamate 233 participates in Mn(2+) binding.

It belongs to the DXR family. Requires Mg(2+) as cofactor. Mn(2+) serves as cofactor.

It catalyses the reaction 2-C-methyl-D-erythritol 4-phosphate + NADP(+) = 1-deoxy-D-xylulose 5-phosphate + NADPH + H(+). It functions in the pathway isoprenoid biosynthesis; isopentenyl diphosphate biosynthesis via DXP pathway; isopentenyl diphosphate from 1-deoxy-D-xylulose 5-phosphate: step 1/6. Its function is as follows. Catalyzes the NADPH-dependent rearrangement and reduction of 1-deoxy-D-xylulose-5-phosphate (DXP) to 2-C-methyl-D-erythritol 4-phosphate (MEP). The protein is 1-deoxy-D-xylulose 5-phosphate reductoisomerase of Psychrobacter cryohalolentis (strain ATCC BAA-1226 / DSM 17306 / VKM B-2378 / K5).